Reading from the N-terminus, the 482-residue chain is 2-succinylbenzoate--CoA ligase (482 aa).

This sequence belongs to the ATP-dependent AMP-binding enzyme family. MenE subfamily.

The enzyme catalyses 2-succinylbenzoate + ATP + CoA = 2-succinylbenzoyl-CoA + AMP + diphosphate. The protein operates within quinol/quinone metabolism; 1,4-dihydroxy-2-naphthoate biosynthesis; 1,4-dihydroxy-2-naphthoate from chorismate: step 5/7. It participates in quinol/quinone metabolism; menaquinone biosynthesis. Functionally, converts 2-succinylbenzoate (OSB) to 2-succinylbenzoyl-CoA (OSB-CoA). This chain is 2-succinylbenzoate--CoA ligase, found in Bacillus cereus (strain ZK / E33L).